An 88-amino-acid polypeptide reads, in one-letter code: Large ribosomal subunit protein bL27 (88 aa).

A disordered region spans residues 1–21 (MAHKKGASSSRNGRDSAAQRL).

This sequence belongs to the bacterial ribosomal protein bL27 family.

This chain is Large ribosomal subunit protein bL27, found in Mycobacterium avium (strain 104).